Consider the following 132-residue polypeptide: NADH-quinone oxidoreductase subunit A 2 (132 aa).

3 helical membrane passes run 9–29 (AWAF…MLGL), 66–86 (LVAM…LWAV), and 93–113 (WAGF…LFYL).

Belongs to the complex I subunit 3 family. In terms of assembly, NDH-1 is composed of 13 different subunits. Subunits NuoA, H, J, K, L, M, N constitute the membrane sector of the complex.

The protein resides in the cell inner membrane. The enzyme catalyses a quinone + NADH + 5 H(+)(in) = a quinol + NAD(+) + 4 H(+)(out). In terms of biological role, NDH-1 shuttles electrons from NADH, via FMN and iron-sulfur (Fe-S) centers, to quinones in the respiratory chain. The immediate electron acceptor for the enzyme in this species is believed to be ubiquinone. Couples the redox reaction to proton translocation (for every two electrons transferred, four hydrogen ions are translocated across the cytoplasmic membrane), and thus conserves the redox energy in a proton gradient. In Pseudomonas paraeruginosa (strain DSM 24068 / PA7) (Pseudomonas aeruginosa (strain PA7)), this protein is NADH-quinone oxidoreductase subunit A 2.